We begin with the raw amino-acid sequence, 359 residues long: Phospho-N-acetylmuramoyl-pentapeptide-transferase (359 aa).

Transmembrane regions (helical) follow at residues 3-23, 55-75, 84-104, 120-140, 156-176, 187-207, 231-251, 255-275, 280-300, and 334-354; these read QILI…PVLI, VAIL…GLAL, GLLV…DDLI, TVGI…FGNA, IATV…LVSA, LDGL…LITF, LALV…WNAA, IFMG…LSVT, ILAV…VVQI, and FWLL…GEWL.

The protein belongs to the glycosyltransferase 4 family. MraY subfamily. Requires Mg(2+) as cofactor.

The protein resides in the cell membrane. It catalyses the reaction UDP-N-acetyl-alpha-D-muramoyl-L-alanyl-gamma-D-glutamyl-meso-2,6-diaminopimeloyl-D-alanyl-D-alanine + di-trans,octa-cis-undecaprenyl phosphate = di-trans,octa-cis-undecaprenyl diphospho-N-acetyl-alpha-D-muramoyl-L-alanyl-D-glutamyl-meso-2,6-diaminopimeloyl-D-alanyl-D-alanine + UMP. It functions in the pathway cell wall biogenesis; peptidoglycan biosynthesis. Functionally, catalyzes the initial step of the lipid cycle reactions in the biosynthesis of the cell wall peptidoglycan: transfers peptidoglycan precursor phospho-MurNAc-pentapeptide from UDP-MurNAc-pentapeptide onto the lipid carrier undecaprenyl phosphate, yielding undecaprenyl-pyrophosphoryl-MurNAc-pentapeptide, known as lipid I. The sequence is that of Phospho-N-acetylmuramoyl-pentapeptide-transferase from Mycobacterium sp. (strain MCS).